The sequence spans 454 residues: Ribosomal protein uS12 methylthiotransferase RimO (454 aa).

An MTTase N-terminal domain is found at 9 to 124; sequence PKIGFVSLGC…VMDAVHLHMP (116 aa). Residues C18, C54, C83, C155, C159, and C162 each contribute to the [4Fe-4S] cluster site. A Radical SAM core domain is found at 141-382; sequence LTPKHFAYLK…MLLQEEISKK (242 aa). A TRAM domain is found at 385–454; it reads QAKVGKTMRV…ADAHDLWAEA (70 aa).

The protein belongs to the methylthiotransferase family. RimO subfamily. [4Fe-4S] cluster is required as a cofactor.

It localises to the cytoplasm. The enzyme catalyses L-aspartate(89)-[ribosomal protein uS12]-hydrogen + (sulfur carrier)-SH + AH2 + 2 S-adenosyl-L-methionine = 3-methylsulfanyl-L-aspartate(89)-[ribosomal protein uS12]-hydrogen + (sulfur carrier)-H + 5'-deoxyadenosine + L-methionine + A + S-adenosyl-L-homocysteine + 2 H(+). In terms of biological role, catalyzes the methylthiolation of an aspartic acid residue of ribosomal protein uS12. The sequence is that of Ribosomal protein uS12 methylthiotransferase RimO from Herminiimonas arsenicoxydans.